Reading from the N-terminus, the 74-residue chain is Cytochrome c oxidase assembly factor 5 (74 aa).

The region spanning 27–65 (QSDCVVQEGKSPRQCLKEGYCNSLKYAFFECKRSVLDNR) is the CHCH domain. The Cx10C motif motif lies at 30–41 (CVVQEGKSPRQC). 2 disulfides stabilise this stretch: cysteine 30–cysteine 57 and cysteine 41–cysteine 47. At serine 37 the chain carries Phosphoserine. Residues 47-57 (CNSLKYAFFEC) carry the Cx9C motif motif.

The protein belongs to the PET191 family.

In terms of biological role, involved in an early step of the mitochondrial complex IV assembly process. The sequence is that of Cytochrome c oxidase assembly factor 5 (COA5) from Homo sapiens (Human).